The primary structure comprises 718 residues: Catalase-peroxidase (718 aa).

Residues 98–219 (WHAAGTYRMG…LAATEMGLIY (122 aa)) constitute a cross-link (tryptophyl-tyrosyl-methioninium (Trp-Tyr) (with M-245)). H99 functions as the Proton acceptor in the catalytic mechanism. A cross-link (tryptophyl-tyrosyl-methioninium (Tyr-Met) (with W-98)) is located at residues 219–245 (YVNPEGPQASGDPRSAAPFIRATFGNM). Residue H260 coordinates heme b.

Belongs to the peroxidase family. Peroxidase/catalase subfamily. As to quaternary structure, homodimer or homotetramer. Heme b serves as cofactor. Post-translationally, formation of the three residue Trp-Tyr-Met cross-link is important for the catalase, but not the peroxidase activity of the enzyme.

It carries out the reaction H2O2 + AH2 = A + 2 H2O. The enzyme catalyses 2 H2O2 = O2 + 2 H2O. Its function is as follows. Bifunctional enzyme with both catalase and broad-spectrum peroxidase activity. This Acinetobacter baumannii (strain ATCC 17978 / DSM 105126 / CIP 53.77 / LMG 1025 / NCDC KC755 / 5377) protein is Catalase-peroxidase.